The following is a 148-amino-acid chain: Hemoglobin subunit beta-2 (148 aa).

The region spanning 3 to 148 (EWTDAERTAI…VVSALCRQYH (146 aa)) is the Globin domain. The heme b site is built by His64 and His93.

As to quaternary structure, heterotetramer of two alpha chains and two beta chains. Red blood cells.

Functionally, involved in oxygen transport from gills to the various peripheral tissues. In Danio rerio (Zebrafish), this protein is Hemoglobin subunit beta-2 (ba2).